Consider the following 465-residue polypeptide: WAS protein family homolog 2 (465 aa).

Residues 1–54 (MTPVRMQHSLAGQTYAVPLIQPDLRREEAVQQMADALQYLQKVSGDIFSRISQQ) form a required for WASH complex assembly region. The tract at residues 1–167 (MTPVRMQHSL…EGLGGLPSNI (167 aa)) is WHD1. Residue K220 forms a Glycyl lysine isopeptide (Lys-Gly) (interchain with G-Cter in ubiquitin) linkage. 2 disordered regions span residues 297–407 (QDGV…QGGH) and 422–465 (GISG…DWES). Over residues 302–314 (TPPPPPPPPPPAP) the composition is skewed to pro residues. Residues 349-465 (QGAPREVVDP…AEEDEDDWES (117 aa)) are VCA. In terms of domain architecture, WH2 spans 361–383 (GRATLLESIRQAGGIGKAKLRSM). Basic and acidic residues predominate over residues 382–398 (SMKERKLEKKKQKEQEQ). Positions 424–436 (SGKGPGAGEGPGG) are enriched in gly residues. Positions 456–465 (AEEDEDDWES) are enriched in acidic residues.

Belongs to the WASH1 family. As to quaternary structure, component of the WASH core complex also described as WASH regulatory complex (SHRC) composed of WASH (WASHC1, WASH2P or WASH3P), WASHC2 (WASHC2A or WASHC2C), WASHC3, WASHC4 and WASHC5. The WASH core complex associates with the F-actin-capping protein dimer (formed by CAPZA1, CAPZA2 or CAPZA3 and CAPZB) in a transient or substoichiometric manner which was initially described as WASH complex. Interacts (via WHD1 region) with WASHC2C; the interaction is direct. Interacts with alpha-tubulin. Interacts with BECN1; WASHC1 and AMBRA1 can competitively interact with BECN1. Interacts with BLOC1S2; may associate with the BLOC-1 complex. Interacts with tubulin gamma chain (TUBG1 or TUBG2). Interacts with EXOC1, EXOC4, EXOC8; in MMP14-positive endosomes in breast tumor cells; indicative for an association with the exocyst complex.

The protein resides in the early endosome membrane. The protein localises to the recycling endosome membrane. Its subcellular location is the late endosome. It is found in the cytoplasmic vesicle. It localises to the autophagosome. The protein resides in the cytoplasm. The protein localises to the cytoskeleton. Its subcellular location is the microtubule organizing center. It is found in the centrosome. It localises to the centriole. Acts as a nucleation-promoting factor at the surface of endosomes, where it recruits and activates the Arp2/3 complex to induce actin polymerization, playing a key role in the fission of tubules that serve as transport intermediates during endosome sorting. Involved in endocytic trafficking of EGF. Involved in transferrin receptor recycling. Regulates the trafficking of endosomal alpha5beta1 integrin to the plasma membrane and involved in invasive cell migration. In T-cells involved in endosome-to-membrane recycling of receptors including T-cell receptor (TCR), CD28 and ITGAL; proposed to be implicated in T-cell proliferation and effector function. In dendritic cells involved in endosome-to-membrane recycling of major histocompatibility complex (MHC) class II probably involving retromer and subsequently allowing antigen sampling, loading and presentation during T-cell activation. Involved in Arp2/3 complex-dependent actin assembly driving Salmonella typhimurium invasion independent of ruffling. Involved in the exocytosis of MMP14 leading to matrix remodeling during invasive migration and implicating late endosome-to-plasma membrane tubular connections and cooperation with the exocyst complex. Involved in negative regulation of autophagy independently from its role in endosomal sorting by inhibiting BECN1 ubiquitination to inactivate PIK3C3/Vps34 activity. This chain is WAS protein family homolog 2 (WASH2P), found in Homo sapiens (Human).